A 79-amino-acid polypeptide reads, in one-letter code: Small ribosomal subunit protein bS18 (79 aa).

The protein belongs to the bacterial ribosomal protein bS18 family. Part of the 30S ribosomal subunit. Forms a tight heterodimer with protein bS6.

Its function is as follows. Binds as a heterodimer with protein bS6 to the central domain of the 16S rRNA, where it helps stabilize the platform of the 30S subunit. This chain is Small ribosomal subunit protein bS18, found in Pseudarthrobacter chlorophenolicus (strain ATCC 700700 / DSM 12829 / CIP 107037 / JCM 12360 / KCTC 9906 / NCIMB 13794 / A6) (Arthrobacter chlorophenolicus).